A 658-amino-acid chain; its full sequence is Putative endo-beta-N-acetylglucosaminidase (658 aa).

Positions 1–23 (MKKVRFIFLALLFFLASPEGAMA) are cleaved as a signal peptide. Cell wall-binding repeat units follow at residues 42–63 (ANEW…DANY), 65–84 (ENEW…GGYM), 86–105 (KSEW…DGKM), 124–145 (IEDW…DGQH), 147–166 (EKEW…GGYL), 185–206 (QQGW…NGNY), 208–227 (DKEW…GGYM), 229–248 (ANEW…DGKM), 250–271 (EKEW…GGYM), 273–292 (ANEW…DGKI), 294–315 (EKEW…GGYM), 317–336 (ANEW…DGKI), and 338–359 (EKEW…GGYM).

The protein belongs to the glycosyl hydrolase 73 family.

Its subcellular location is the secreted. The catalysed reaction is an N(4)-(oligosaccharide-(1-&gt;3)-[oligosaccharide-(1-&gt;6)]-beta-D-Man-(1-&gt;4)-beta-D-GlcNAc-(1-&gt;4)-alpha-D-GlcNAc)-L-asparaginyl-[protein] + H2O = an oligosaccharide-(1-&gt;3)-[oligosaccharide-(1-&gt;6)]-beta-D-Man-(1-&gt;4)-D-GlcNAc + N(4)-(N-acetyl-beta-D-glucosaminyl)-L-asparaginyl-[protein]. Its function is as follows. Plays an important role in cell wall degradation and cell separation. This is Putative endo-beta-N-acetylglucosaminidase (lytB) from Streptococcus pneumoniae serotype 4 (strain ATCC BAA-334 / TIGR4).